We begin with the raw amino-acid sequence, 312 residues long: Probable myosin light chain kinase DDB_G0282429 (312 aa).

The tract at residues 1–28 (MDRMDSSDEEIDNISDDELQSGDEIEVE) is disordered. Acidic residues predominate over residues 7-27 (SDEEIDNISDDELQSGDEIEV). The 253-residue stretch at 38-290 (YILGNEIGRG…FEQCLIHPWV (253 aa)) folds into the Protein kinase domain. Residues 44–52 (IGRGAFSIV) and Lys67 each bind ATP. Asp158 (proton acceptor) is an active-site residue.

The protein belongs to the protein kinase superfamily. CAMK Ser/Thr protein kinase family. CaMK subfamily.

The catalysed reaction is L-seryl-[myosin light chain] + ATP = O-phospho-L-seryl-[myosin light chain] + ADP + H(+). The enzyme catalyses L-threonyl-[myosin light chain] + ATP = O-phospho-L-threonyl-[myosin light chain] + ADP + H(+). With respect to regulation, does not have a calmodulin-binding domain. Functionally, may phosphorylate a specific serine in the N-terminus of a myosin light chain. The protein is Probable myosin light chain kinase DDB_G0282429 of Dictyostelium discoideum (Social amoeba).